Consider the following 114-residue polypeptide: T cell receptor alpha variable 10 (114 aa).

Positions 1 to 21 (MKKHLTTFLVILWLYFYRGNG) are cleaved as a signal peptide. Positions 23–114 (NQVEQSPQSL…DSASYICVVS (92 aa)) constitute an Ig-like domain. 2 N-linked (GlcNAc...) asparagine glycosylation sites follow: asparagine 39 and asparagine 45. A disulfide bridge connects residues cysteine 44 and cysteine 111.

As to quaternary structure, alpha-beta TR is a heterodimer composed of an alpha and beta chain; disulfide-linked. The alpha-beta TR is associated with the transmembrane signaling CD3 coreceptor proteins to form the TR-CD3 (TcR or TCR). The assembly of alpha-beta TR heterodimers with CD3 occurs in the endoplasmic reticulum where a single alpha-beta TR heterodimer associates with one CD3D-CD3E heterodimer, one CD3G-CD3E heterodimer and one CD247 homodimer forming a stable octameric structure. CD3D-CD3E and CD3G-CD3E heterodimers preferentially associate with TR alpha and TR beta chains, respectively. The association of the CD247 homodimer is the last step of TcR assembly in the endoplasmic reticulum and is required for transport to the cell surface.

Its subcellular location is the cell membrane. Functionally, v region of the variable domain of T cell receptor (TR) alpha chain that participates in the antigen recognition. Alpha-beta T cell receptors are antigen specific receptors which are essential to the immune response and are present on the cell surface of T lymphocytes. Recognize peptide-major histocompatibility (MH) (pMH) complexes that are displayed by antigen presenting cells (APC), a prerequisite for efficient T cell adaptive immunity against pathogens. Binding of alpha-beta TR to pMH complex initiates TR-CD3 clustering on the cell surface and intracellular activation of LCK that phosphorylates the ITAM motifs of CD3G, CD3D, CD3E and CD247 enabling the recruitment of ZAP70. In turn ZAP70 phosphorylates LAT, which recruits numerous signaling molecules to form the LAT signalosome. The LAT signalosome propagates signal branching to three major signaling pathways, the calcium, the mitogen-activated protein kinase (MAPK) kinase and the nuclear factor NF-kappa-B (NF-kB) pathways, leading to the mobilization of transcription factors that are critical for gene expression and essential for T cell growth and differentiation. The T cell repertoire is generated in the thymus, by V-(D)-J rearrangement. This repertoire is then shaped by intrathymic selection events to generate a peripheral T cell pool of self-MH restricted, non-autoaggressive T cells. Post-thymic interaction of alpha-beta TR with the pMH complexes shapes TR structural and functional avidity. This Homo sapiens (Human) protein is T cell receptor alpha variable 10.